Consider the following 360-residue polypeptide: Carbamoyl phosphate synthase small chain (360 aa).

Residues 1 to 169 (MTKRLLILED…TKTAYPAPGI (169 aa)) form a CPSase region. Residues Ser46, Gly220, and Gly222 each coordinate L-glutamine. The region spanning 172-358 (NIVLVDFGLK…LEMIDSWRCT (187 aa)) is the Glutamine amidotransferase type-1 domain. Cys247 serves as the catalytic Nucleophile. Positions 248, 251, 289, 291, and 292 each coordinate L-glutamine. Catalysis depends on residues His331 and Asp333.

Belongs to the CarA family. Composed of two chains; the small (or glutamine) chain promotes the hydrolysis of glutamine to ammonia, which is used by the large (or ammonia) chain to synthesize carbamoyl phosphate. Tetramer of heterodimers (alpha,beta)4.

It carries out the reaction hydrogencarbonate + L-glutamine + 2 ATP + H2O = carbamoyl phosphate + L-glutamate + 2 ADP + phosphate + 2 H(+). It catalyses the reaction L-glutamine + H2O = L-glutamate + NH4(+). It functions in the pathway amino-acid biosynthesis; L-arginine biosynthesis; carbamoyl phosphate from bicarbonate: step 1/1. It participates in pyrimidine metabolism; UMP biosynthesis via de novo pathway; (S)-dihydroorotate from bicarbonate: step 1/3. Small subunit of the glutamine-dependent carbamoyl phosphate synthetase (CPSase). CPSase catalyzes the formation of carbamoyl phosphate from the ammonia moiety of glutamine, carbonate, and phosphate donated by ATP, constituting the first step of 2 biosynthetic pathways, one leading to arginine and/or urea and the other to pyrimidine nucleotides. The small subunit (glutamine amidotransferase) binds and cleaves glutamine to supply the large subunit with the substrate ammonia. In Streptococcus pyogenes serotype M3 (strain SSI-1), this protein is Carbamoyl phosphate synthase small chain.